Consider the following 515-residue polypeptide: Fatty acyl-CoA reductase 2 (515 aa).

Topologically, residues 1–464 (MSTIAAFYGG…KAKQRLKRLR (464 aa)) are cytoplasmic. The chain crosses the membrane as a helical span at residues 465-484 (NIHYLFNTALFLIAWRLLIA). Topologically, residues 485–515 (RSQMARNVWFFIVSFCYKFLSYFRASSTLKV) are peroxisomal.

This sequence belongs to the fatty acyl-CoA reductase family.

Its subcellular location is the peroxisome membrane. It catalyses the reaction a long-chain fatty acyl-CoA + 2 NADPH + 2 H(+) = a long-chain primary fatty alcohol + 2 NADP(+) + CoA. The enzyme catalyses a very long-chain fatty acyl-CoA + 2 NADPH + 2 H(+) = a very long-chain primary fatty alcohol + 2 NADP(+) + CoA. It carries out the reaction an ultra-long-chain fatty acyl-CoA + 2 NADPH + 2 H(+) = an ultra long-chain primary fatty alcohol + 2 NADP(+) + CoA. The catalysed reaction is hexadecanoyl-CoA + 2 NADPH + 2 H(+) = hexadecan-1-ol + 2 NADP(+) + CoA. It catalyses the reaction octadecanoyl-CoA + 2 NADPH + 2 H(+) = octadecan-1-ol + 2 NADP(+) + CoA. The enzyme catalyses eicosanoyl-CoA + 2 NADPH + 2 H(+) = eicosan-1-ol + 2 NADP(+) + CoA. It carries out the reaction docosanoyl-CoA + 2 NADPH + 2 H(+) = docosan-1-ol + 2 NADP(+) + CoA. The catalysed reaction is tetracosanoyl-CoA + 2 NADPH + 2 H(+) = tetracosan-1-ol + 2 NADP(+) + CoA. It catalyses the reaction hexacosanoyl-CoA + 2 NADPH + 2 H(+) = hexacosan-1-ol + 2 NADP(+) + CoA. The enzyme catalyses octacosanoyl-CoA + 2 NADPH + 2 H(+) = octacosan-1-ol + 2 NADP(+) + CoA. It carries out the reaction triacontanoyl-CoA + 2 NADPH + 2 H(+) = triacontan-1-ol + 2 NADP(+) + CoA. The catalysed reaction is 18-methylnonadecanoyl-CoA + 2 NADPH + 2 H(+) = 18-methylnonadecan-1-ol + 2 NADP(+) + CoA. It catalyses the reaction 20-methylheneicosanoyl-CoA + 2 NADPH + 2 H(+) = 20-methylheneicosan-1-ol + 2 NADP(+) + CoA. The enzyme catalyses 22-methyltricosanoyl-CoA + 2 NADPH + 2 H(+) = 22-methyltricosan-1-ol + 2 NADP(+) + CoA. It carries out the reaction 24-methylpentacosanoyl-CoA + 2 NADPH + 2 H(+) = 24-methylpentacosan-1-ol + 2 NADP(+) + CoA. Functionally, catalyzes the reduction of saturated but not unsaturated C16 or C18 fatty acyl-CoA to fatty alcohols (FAls). A lower activity can be observed with shorter fatty acyl-CoA substrates. Can produce very long-chain and ultra long-chain FAls, regardless of whether they have a straight or branched chain. Involved in the production of ether lipids/plasmalogens and wax monoesters whose synthesis requires FAls as substrates. This chain is Fatty acyl-CoA reductase 2, found in Homo sapiens (Human).